The primary structure comprises 168 residues: Transcription antitermination protein NusB (168 aa).

Belongs to the NusB family.

Involved in transcription antitermination. Required for transcription of ribosomal RNA (rRNA) genes. Binds specifically to the boxA antiterminator sequence of the ribosomal RNA (rrn) operons. The polypeptide is Transcription antitermination protein NusB (Prosthecochloris aestuarii (strain DSM 271 / SK 413)).